Here is a 451-residue protein sequence, read N- to C-terminus: Clusterin (451 aa).

An N-terminal signal peptide occupies residues methionine 1 to glycine 18. 5 cysteine pairs are disulfide-bonded: cysteine 98-cysteine 314, cysteine 109-cysteine 306, cysteine 112-cysteine 303, cysteine 117-cysteine 296, and cysteine 125-cysteine 286. N-linked (GlcNAc...) asparagine glycosylation is found at asparagine 99, asparagine 141, asparagine 278, asparagine 355, asparagine 375, and asparagine 447.

Belongs to the clusterin family. Antiparallel disulfide-linked heterodimer of an alpha chain and a beta chain. Self-associates and forms higher oligomers. Interacts with a broad range of misfolded proteins. Proteolytically cleaved on its way through the secretory system, probably within the Golgi lumen. Post-translationally, polyubiquitinated, leading to proteasomal degradation.

It is found in the secreted. It localises to the cytoplasmic vesicle. The protein resides in the secretory vesicle. The protein localises to the chromaffin granule. Its subcellular location is the nucleus. It is found in the cytoplasm. It localises to the mitochondrion membrane. The protein resides in the cytosol. The protein localises to the endoplasmic reticulum. Functionally, functions as extracellular chaperone that prevents aggregation of nonnative proteins. Prevents stress-induced aggregation of blood plasma proteins. Does not require ATP. Maintains partially unfolded proteins in a state appropriate for subsequent refolding by other chaperones, such as HSPA8/HSC70. Does not refold proteins by itself. Binding to cell surface receptors triggers internalization of the chaperone-client complex and subsequent lysosomal or proteasomal degradation. When secreted, protects cells against apoptosis and against cytolysis by complement: inhibits assembly of the complement membrane attack complex (MAC) by preventing polymerization of C9 pore component of the MAC complex. Intracellular forms interact with ubiquitin and SCF (SKP1-CUL1-F-box protein) E3 ubiquitin-protein ligase complexes and promote the ubiquitination and subsequent proteasomal degradation of target proteins. Modulates NF-kappa-B transcriptional activity. Promotes apoptosis when in the nucleus. Inhibits apoptosis when associated with the mitochondrial membrane by interference with BAX-dependent release of cytochrome c into the cytoplasm. Plays a role in the regulation of cell proliferation. The sequence is that of Clusterin (CLU) from Coturnix japonica (Japanese quail).